The chain runs to 98 residues: NADH-ubiquinone oxidoreductase chain 4L (98 aa).

The next 3 membrane-spanning stretches (helical) occupy residues 1 to 21 (MSLT…GLLM), 29 to 49 (ALLC…ITIL), and 61 to 81 (IILL…LVMV).

Belongs to the complex I subunit 4L family. In terms of assembly, core subunit of respiratory chain NADH dehydrogenase (Complex I) which is composed of 45 different subunits.

It is found in the mitochondrion inner membrane. It catalyses the reaction a ubiquinone + NADH + 5 H(+)(in) = a ubiquinol + NAD(+) + 4 H(+)(out). Its function is as follows. Core subunit of the mitochondrial membrane respiratory chain NADH dehydrogenase (Complex I) which catalyzes electron transfer from NADH through the respiratory chain, using ubiquinone as an electron acceptor. Part of the enzyme membrane arm which is embedded in the lipid bilayer and involved in proton translocation. This chain is NADH-ubiquinone oxidoreductase chain 4L (MT-ND4L), found in Rhinophylla pumilio (Dwarf little fruit bat).